The following is a 207-amino-acid chain: Small ribosomal subunit protein uS4 (207 aa).

Positions 96–156 constitute an S4 RNA-binding domain; that stretch reads SRLDNVVYRM…KKSHNQSRIY (61 aa).

This sequence belongs to the universal ribosomal protein uS4 family. As to quaternary structure, part of the 30S ribosomal subunit. Contacts protein S5. The interaction surface between S4 and S5 is involved in control of translational fidelity.

Its function is as follows. One of the primary rRNA binding proteins, it binds directly to 16S rRNA where it nucleates assembly of the body of the 30S subunit. With S5 and S12 plays an important role in translational accuracy. The polypeptide is Small ribosomal subunit protein uS4 (Blochmanniella floridana).